Consider the following 541-residue polypeptide: Eukaryotic translation initiation factor 3 subunit E (541 aa).

The PCI domain maps to 252-443; the sequence is VEMFLSPVYL…GMVFMNPTHP (192 aa). Residues 466–541 form a disordered region; it reads AIDRKAHPPS…QQPAQAIAAN (76 aa). The span at 490 to 502 shows a compositional bias: gly residues; it reads NAGGRGGRGGQRN. A compositionally biased stretch (basic and acidic residues) spans 506–522; the sequence is QRDRSHAHNNEAKREGE. Over residues 523 to 541 the composition is skewed to low complexity; sequence SASAEEAQQQQPAQAIAAN.

Belongs to the eIF-3 subunit E family. As to quaternary structure, component of the eukaryotic translation initiation factor 3 (eIF-3) complex.

Its subcellular location is the cytoplasm. In terms of biological role, component of the eukaryotic translation initiation factor 3 (eIF-3) complex, which is involved in protein synthesis of a specialized repertoire of mRNAs and, together with other initiation factors, stimulates binding of mRNA and methionyl-tRNAi to the 40S ribosome. The eIF-3 complex specifically targets and initiates translation of a subset of mRNAs involved in cell proliferation. This is Eukaryotic translation initiation factor 3 subunit E from Mycosarcoma maydis (Corn smut fungus).